The primary structure comprises 159 residues: ATP synthase subunit b 2 (159 aa).

Residues 1 to 21 traverse the membrane as a helical segment; sequence MDATFWAFIALVIFVAIVVYM.

It belongs to the ATPase B chain family. F-type ATPases have 2 components, F(1) - the catalytic core - and F(0) - the membrane proton channel. F(1) has five subunits: alpha(3), beta(3), gamma(1), delta(1), epsilon(1). F(0) has three main subunits: a(1), b(2) and c(10-14). The alpha and beta chains form an alternating ring which encloses part of the gamma chain. F(1) is attached to F(0) by a central stalk formed by the gamma and epsilon chains, while a peripheral stalk is formed by the delta and b chains.

The protein resides in the cell inner membrane. F(1)F(0) ATP synthase produces ATP from ADP in the presence of a proton or sodium gradient. F-type ATPases consist of two structural domains, F(1) containing the extramembraneous catalytic core and F(0) containing the membrane proton channel, linked together by a central stalk and a peripheral stalk. During catalysis, ATP synthesis in the catalytic domain of F(1) is coupled via a rotary mechanism of the central stalk subunits to proton translocation. Functionally, component of the F(0) channel, it forms part of the peripheral stalk, linking F(1) to F(0). This Brucella abortus (strain S19) protein is ATP synthase subunit b 2.